The primary structure comprises 451 residues: Lipase member H (451 aa).

Positions 1 to 16 are cleaved as a signal peptide; it reads MLRLCFFISFMCLVKS. The N-linked (GlcNAc...) asparagine glycan is linked to Asn66. Ser154 (nucleophile) is an active-site residue. Asp178 acts as the Charge relay system in catalysis. Cys233 and Cys246 are disulfide-bonded. His248 acts as the Charge relay system in catalysis. Disulfide bonds link Cys270-Cys281, Cys284-Cys292, and Cys427-Cys446.

The protein belongs to the AB hydrolase superfamily. Lipase family. As to quaternary structure, interacts with TTMP/C3orf52. Expressed in placenta and colon. Weakly expressed in small intestine.

The protein resides in the secreted. It is found in the cell membrane. It catalyses the reaction 1-hexadecanoyl-2-(9Z-octadecenoyl)-sn-glycero-3-phosphate + H2O = 2-(9Z-octadecenoyl)-sn-glycero-3-phosphate + hexadecanoate + H(+). Its function is as follows. Hydrolyzes specifically phosphatidic acid (PA) to produce 2-acyl lysophosphatidic acid (LPA; a potent bioactive lipid mediator) and fatty acid. Does not hydrolyze other phospholipids, like phosphatidylserine (PS), phosphatidylcholine (PC) and phosphatidylethanolamine (PE) or triacylglycerol (TG). The chain is Lipase member H (Liph) from Mus musculus (Mouse).